The primary structure comprises 290 residues: tRNA-cytidine(32) 2-sulfurtransferase (290 aa).

The PP-loop motif signature appears at 66 to 71 (SGGKDS). Residues Cys-141, Cys-144, and Cys-232 each coordinate [4Fe-4S] cluster.

Belongs to the TtcA family. In terms of assembly, homodimer. Mg(2+) is required as a cofactor. The cofactor is [4Fe-4S] cluster.

Its subcellular location is the cytoplasm. It carries out the reaction cytidine(32) in tRNA + S-sulfanyl-L-cysteinyl-[cysteine desulfurase] + AH2 + ATP = 2-thiocytidine(32) in tRNA + L-cysteinyl-[cysteine desulfurase] + A + AMP + diphosphate + H(+). It functions in the pathway tRNA modification. Catalyzes the ATP-dependent 2-thiolation of cytidine in position 32 of tRNA, to form 2-thiocytidine (s(2)C32). The sulfur atoms are provided by the cysteine/cysteine desulfurase (IscS) system. The sequence is that of tRNA-cytidine(32) 2-sulfurtransferase from Rhizobium etli (strain ATCC 51251 / DSM 11541 / JCM 21823 / NBRC 15573 / CFN 42).